A 702-amino-acid chain; its full sequence is Elongation factor G (702 aa).

Residues Ala-8–Thr-290 form the tr-type G domain. GTP-binding positions include Ala-17 to Thr-24, Asp-88 to His-92, and Asn-142 to Asp-145.

Belongs to the TRAFAC class translation factor GTPase superfamily. Classic translation factor GTPase family. EF-G/EF-2 subfamily.

The protein localises to the cytoplasm. Its function is as follows. Catalyzes the GTP-dependent ribosomal translocation step during translation elongation. During this step, the ribosome changes from the pre-translocational (PRE) to the post-translocational (POST) state as the newly formed A-site-bound peptidyl-tRNA and P-site-bound deacylated tRNA move to the P and E sites, respectively. Catalyzes the coordinated movement of the two tRNA molecules, the mRNA and conformational changes in the ribosome. In Photorhabdus laumondii subsp. laumondii (strain DSM 15139 / CIP 105565 / TT01) (Photorhabdus luminescens subsp. laumondii), this protein is Elongation factor G.